The chain runs to 248 residues: TPR repeat-containing protein slr0751 (248 aa).

TPR repeat units follow at residues 61-94, 95-128, 129-162, and 163-196; these read PEAI…SPDS, PETH…DRYY, IPPY…DPNR, and YKAY…RPDY.

The protein is TPR repeat-containing protein slr0751 of Synechocystis sp. (strain ATCC 27184 / PCC 6803 / Kazusa).